The chain runs to 324 residues: MEFILSLIGSLLLIICVLVSVAFLTLLERKVLGYIQIRKGPNKVGLMGIPQPFCDAIKLFTKEQTYPLLSNYLSYYISPIFSLFLSLFVWMCMPFFVKLYSFNLGGLFFLCCTSLGVYTVMVAGWSSNSNYALLGGLRAVAQTISYEVSLALIMLSFIFLIGSYNMIYFFYYQIYMWFLIILFPMSLVWLTISLAETNRTPFDFAEGESELVSGFNVEYSSGGFALIFMAEYASILFMSMLFCVIFLGCDVFNLLFYVKLTFISFVFIWARGTLPRFRYDKLMYLAWKCFLSFSLNYLLFFIGFKILLFSFLLWIFFSKKLMEN.

The next 8 helical transmembrane spans lie at 3–23, 77–97, 104–124, 150–170, 174–194, 226–246, 250–270, and 297–317; these read FILS…SVAF, ISPI…PFFV, LGGL…MVAG, LALI…IYFF, IYMW…TISL, LIFM…CVIF, DVFN…FIWA, and YLLF…WIFF.

This sequence belongs to the complex I subunit 1 family.

It is found in the mitochondrion inner membrane. It catalyses the reaction a ubiquinone + NADH + 5 H(+)(in) = a ubiquinol + NAD(+) + 4 H(+)(out). Its function is as follows. Core subunit of the mitochondrial membrane respiratory chain NADH dehydrogenase (Complex I) that is believed to belong to the minimal assembly required for catalysis. Complex I functions in the transfer of electrons from NADH to the respiratory chain. The immediate electron acceptor for the enzyme is believed to be ubiquinone. The protein is NADH-ubiquinone oxidoreductase chain 1 (mt:ND1) of Drosophila yakuba (Fruit fly).